We begin with the raw amino-acid sequence, 210 residues long: Somatotropin (210 aa).

The first 23 residues, 1-23 (MARALVLLSVVLVSLLVNQGTAS), serve as a signal peptide directing secretion. His-38 lines the Zn(2+) pocket. The cysteines at positions 71 and 183 are disulfide-linked. Glu-192 lines the Zn(2+) pocket. A disulfide bridge links Cys-200 with Cys-208.

The protein belongs to the somatotropin/prolactin family.

It is found in the secreted. In terms of biological role, growth hormone plays an important role in growth control. The chain is Somatotropin (gh) from Ctenopharyngodon idella (Grass carp).